The sequence spans 97 residues: Large ribosomal subunit protein bL28 (97 aa).

Belongs to the bacterial ribosomal protein bL28 family.

The chain is Large ribosomal subunit protein bL28 from Rickettsia prowazekii (strain Madrid E).